The primary structure comprises 187 residues: Transmembrane protein 11-B, mitochondrial (187 aa).

2 helical membrane-spanning segments follow: residues 79–95 (TAVL…LALP) and 102–119 (VSLP…LYGI).

This sequence belongs to the TMEM11 family.

The protein localises to the mitochondrion inner membrane. Plays a role in mitochondrial morphogenesis. This Xenopus laevis (African clawed frog) protein is Transmembrane protein 11-B, mitochondrial (tmem11-b).